The sequence spans 378 residues: Chaperone protein DnaJ (378 aa).

The J domain occupies 5–69 (EYYDRLGVSK…QKRAAYDQYG (65 aa)). The segment at 134 to 216 (GVEKEVSYNR…CHGTGHEKQA (83 aa)) adopts a CR-type zinc-finger fold. Residues Cys-147, Cys-150, Cys-164, Cys-167, Cys-190, Cys-193, Cys-204, and Cys-207 each coordinate Zn(2+). 4 CXXCXGXG motif repeats span residues 147–154 (CGTCLGSG), 164–171 (CRKCHGSG), 190–197 (CDICHGSG), and 204–211 (CQTCHGTG).

This sequence belongs to the DnaJ family. As to quaternary structure, homodimer. Requires Zn(2+) as cofactor.

It is found in the cytoplasm. Its function is as follows. Participates actively in the response to hyperosmotic and heat shock by preventing the aggregation of stress-denatured proteins and by disaggregating proteins, also in an autonomous, DnaK-independent fashion. Unfolded proteins bind initially to DnaJ; upon interaction with the DnaJ-bound protein, DnaK hydrolyzes its bound ATP, resulting in the formation of a stable complex. GrpE releases ADP from DnaK; ATP binding to DnaK triggers the release of the substrate protein, thus completing the reaction cycle. Several rounds of ATP-dependent interactions between DnaJ, DnaK and GrpE are required for fully efficient folding. Also involved, together with DnaK and GrpE, in the DNA replication of plasmids through activation of initiation proteins. The protein is Chaperone protein DnaJ of Streptococcus pyogenes serotype M6 (strain ATCC BAA-946 / MGAS10394).